Consider the following 150-residue polypeptide: Putative esterase SSO1253 (150 aa).

It belongs to the thioesterase PaaI family.

In Saccharolobus solfataricus (strain ATCC 35092 / DSM 1617 / JCM 11322 / P2) (Sulfolobus solfataricus), this protein is Putative esterase SSO1253.